The chain runs to 328 residues: uncharacterized protein (328 aa).

The segment at residues 72–91 (ALQIRDKFNLQRVIIVPDGE) is a DNA-binding region (H-T-H motif).

Belongs to the SorC transcriptional regulatory family.

This is an uncharacterized protein from Escherichia coli (strain K12).